We begin with the raw amino-acid sequence, 95 residues long: Small integral membrane protein 26 (95 aa).

The helical transmembrane segment at 13–35 (MSVVYGIGTWSVLGSLLYYSRTM) threads the bilayer.

It belongs to the SMIM26 family. As to quaternary structure, interacts with AGK and SLC25A11. In terms of tissue distribution, detected in kidney (at protein level).

The protein resides in the mitochondrion outer membrane. Its function is as follows. May play a role in cell viability. This Homo sapiens (Human) protein is Small integral membrane protein 26.